The chain runs to 248 residues: Triosephosphate isomerase (248 aa).

A substrate-binding site is contributed by 9-11 (NWK). Catalysis depends on His-94, which acts as the Electrophile. Catalysis depends on Glu-166, which acts as the Proton acceptor. Residues Gly-172, Ser-212, and 233–234 (GG) each bind substrate.

This sequence belongs to the triosephosphate isomerase family. As to quaternary structure, homodimer.

It localises to the cytoplasm. The catalysed reaction is D-glyceraldehyde 3-phosphate = dihydroxyacetone phosphate. The protein operates within carbohydrate biosynthesis; gluconeogenesis. It functions in the pathway carbohydrate degradation; glycolysis; D-glyceraldehyde 3-phosphate from glycerone phosphate: step 1/1. Involved in the gluconeogenesis. Catalyzes stereospecifically the conversion of dihydroxyacetone phosphate (DHAP) to D-glyceraldehyde-3-phosphate (G3P). The polypeptide is Triosephosphate isomerase (Caldanaerobacter subterraneus subsp. tengcongensis (strain DSM 15242 / JCM 11007 / NBRC 100824 / MB4) (Thermoanaerobacter tengcongensis)).